A 359-amino-acid chain; its full sequence is Tyrosine-protein phosphatase non-receptor type 7 (359 aa).

The disordered stretch occupies residues 1 to 33 (MVQACEGRSRAQLPTLSLGADMTQPPPTKAPAK). Residues 38 to 51 (LQERRGSSVALMLD) are interaction with MAP kinases. S44 bears the Phosphoserine mark. T66 bears the Phosphothreonine mark. Phosphoserine is present on residues S93 and S143. One can recognise a Tyrosine-protein phosphatase domain in the interval 97-349 (LEEEFLKIPS…QFLHHTLALY (253 aa)). Residues D257, 290–296 (CSAGIGR), and Q334 contribute to the substrate site. C290 acts as the Phosphocysteine intermediate in catalysis. Position 290 is a cysteine sulfenic acid (-SOH) (C290).

The protein belongs to the protein-tyrosine phosphatase family. Non-receptor class subfamily. Post-translationally, oxidized at active site cysteine. Treatment with pervanadate (vanadate and H(2)O(2)) or with antigen enhanced oxidation of active site cysteine. Expressed in bone marrow-derived mast cells.

It localises to the cytoplasm. It is found in the cytoskeleton. It carries out the reaction O-phospho-L-tyrosyl-[protein] + H2O = L-tyrosyl-[protein] + phosphate. Its activity is regulated as follows. Inhibited upon FCER1A triggering. May play a role in the regulation of T and B-lymphocyte development and signal transduction. This is Tyrosine-protein phosphatase non-receptor type 7 (Ptpn7) from Mus musculus (Mouse).